Here is a 503-residue protein sequence, read N- to C-terminus: Maturase K (503 aa).

It belongs to the intron maturase 2 family. MatK subfamily.

Its subcellular location is the plastid. The protein localises to the chloroplast. In terms of biological role, usually encoded in the trnK tRNA gene intron. Probably assists in splicing its own and other chloroplast group II introns. In Rosa carolina (Pasture rose), this protein is Maturase K.